Reading from the N-terminus, the 1099-residue chain is Solute carrier family 38 member 10 (1099 aa).

A run of 10 helical transmembrane segments spans residues 9 to 31 (WGLV…PFCF), 36 to 58 (IVLG…MFLV), 84 to 104 (LVET…YVVI), 123 to 143 (TFRV…LSLQ), 153 to 173 (FSAM…LSSF), 229 to 249 (IFAS…FFGY), 272 to 292 (MIRV…ILPC), 323 to 343 (VLTL…PNVE), 345 to 365 (ILGF…PALI), and 378 to 398 (VVLW…LSVS). Disordered stretches follow at residues 440–679 (DSQE…EEAG) and 720–1047 (EIRQ…LAPK). The residue at position 441 (S441) is a Phosphoserine. Basic and acidic residues-rich tracts occupy residues 441–454 (SQEK…KEVL), 493–508 (EAHR…KVVV), 517–528 (PEEKKPPPKLPD), 544–561 (ESEK…KRPE), and 586–599 (PRKE…RDLH). 2 positions are modified to phosphoserine: S607 and S635. 3 stretches are compositionally biased toward basic and acidic residues: residues 653 to 663 (EAAEQREKNEA), 720 to 735 (EIRQ…KPKP), and 749 to 766 (GQEE…HAGE). Residues 698 to 734 (VQQKRLLDQQEKLLAVIEEQHKEIRQQRQEGEEDKPK) are a coiled coil. Position 767 is a phosphothreonine (T767). Basic and acidic residues-rich tracts occupy residues 793–802 (KGQHPLEEVK), 852–894 (EPVH…ETGK), 917–928 (EDSHSKSRHSEP), 957–969 (KSQD…RSEG), and 1010–1022 (QKPE…RDLK). S886 carries the post-translational modification Phosphoserine.

Belongs to the amino acid/polyamine transporter 2 family. Only expressed in the pituitary, adrenal gland, stomach and in the upper gastrointestinal tract.

The protein resides in the membrane. It catalyses the reaction L-glutamate(out) = L-glutamate(in). The catalysed reaction is L-glutamine(out) = L-glutamine(in). It carries out the reaction L-alanine(in) = L-alanine(out). The enzyme catalyses L-serine(in) = L-serine(out). It catalyses the reaction L-leucine(in) = L-leucine(out). Its function is as follows. Facilitates bidirectional transport of amino acids. May act as a glutamate sensor that regulates glutamate-glutamine cycle and mTOR signaling in the brain. The transport mechanism remains to be elucidated. This is Solute carrier family 38 member 10 from Rattus norvegicus (Rat).